A 712-amino-acid polypeptide reads, in one-letter code: WD repeat-containing protein 91 (712 aa).

Positions 148–180 (RRTNQVQEENEVLRQKLFALQAEIHRLKKEEQQ) form a coiled coil. Serine 221 carries the phosphoserine modification. Over residues 230 to 243 (LLPQSKKSPSRLSP) the composition is skewed to low complexity. The interval 230–336 (LLPQSKKSPS…EAEPCPELHT (107 aa)) is disordered. A phosphoserine mark is found at serine 253 and serine 258. Over residues 297–308 (RLQDHGKERKEL) the composition is skewed to basic and acidic residues. WD repeat units follow at residues 371 to 410 (EHHS…QTKA), 413 to 453 (ISKS…NLCE), 480 to 520 (AAPS…QQLQ), 525 to 564 (PEPI…CAMS), 567 to 606 (AHYG…LKVS), 629 to 667 (VQVP…KVLE), and 674 to 712 (GHRA…AHKA).

This sequence belongs to the WD repeat WDR91 family. Interacts with WDR81; involved in early to late endosome cargo transport. Interacts with BECN1; negatively regulates the PI3 kinase/PI3K activity associated with endosomal membranes.

It is found in the early endosome membrane. Its subcellular location is the late endosome membrane. Its function is as follows. Functions as a negative regulator of the PI3 kinase/PI3K activity associated with endosomal membranes via BECN1, a core subunit of the PI3K complex. By modifying the phosphatidylinositol 3-phosphate/PtdInsP3 content of endosomal membranes may regulate endosome fusion, recycling, sorting and early to late endosome transport. It is for instance, required for the delivery of cargos like BST2/tetherin from early to late endosome and thereby participates indirectly to their degradation by the lysosome. May play a role in meiosis. The protein is WD repeat-containing protein 91 of Pongo abelii (Sumatran orangutan).